The following is a 501-amino-acid chain: MARDLRGFIQLLETRGQLRRITAEVDPDLEVAEISNRMLQAGGPGLLFENVKGSPFPVAVNLMGTVERICWAMNMDHPLELEDLGKKLALLQQPKPPKKISQAIDFGKVLFDVLKAKPGRNFFPPCQEVVIDGENLDLNQIPLIRPYPGDAGKIITLGLVITKDCETGTPNVGVYRLQLQSKTTMTVHWLSVRGGARHLRKAAEQGKKLEVAIALGVDPLIIMAAATPIPVDLSEWLFAGLYGGSGVALAKCKTVDLEVPADSEFVLEGTITPGEMLPDGPFGDHMGYYGGVEDSPLVRFQCLTHRKNPVYLTTFSGRPPKEEAMMAIALNRIYTPILRQQVSEITDFFLPMEALSYKAAIISIDKAYPGQAKRAALAFWSALPQFTYTKFVIVVDKSINIRDPRQVVWAISSKVDPVRDVFILPETPFDSLDFASEKIGLGGRMGIDATTKIPPETDHEWGEVLESDPAMAEQVSQRWAEYGLGDINLTEVNPNLFGYDV.

It belongs to the UbiD family.

This is an uncharacterized protein from Synechocystis sp. (strain ATCC 27184 / PCC 6803 / Kazusa).